The following is a 1369-amino-acid chain: Neurofascin (1369 aa).

Residues Met-1–Ala-25 form the signal peptide. Residues Ile-26–Trp-1235 lie on the Extracellular side of the membrane. Ig-like C2-type domains follow at residues Pro-42 to Ser-138 and Pro-144 to Thr-231. Disulfide bonds link Cys-64–Cys-119 and Cys-163–Cys-214. N-linked (GlcNAc...) asparagine glycosylation is found at Asn-241, Asn-247, and Asn-323. Ig-like C2-type domains are found at residues Pro-262–Arg-350, Pro-355–Ser-442, Pro-448–Glu-535, and Pro-539–Thr-626. 2 disulfides stabilise this stretch: Cys-286/Cys-334 and Cys-376/Cys-426. 3 N-linked (GlcNAc...) asparagine glycosylation sites follow: Asn-427, Asn-464, and Asn-501. 2 disulfides stabilise this stretch: Cys-470–Cys-519 and Cys-561–Cys-610. Fibronectin type-III domains lie at Arg-645–Ala-740, Asn-745–Asp-838, Ala-843–Gly-945, and Ser-949–Ser-1057. N-linked (GlcNAc...) asparagine glycosylation occurs at Asn-692. Residues Met-730–Gly-739 show a composition bias toward polar residues. Positions Met-730 to Gly-753 are disordered. N-linked (GlcNAc...) asparagine glycosylation is found at Asn-767, Asn-793, Asn-853, Asn-994, and Asn-1009. Residues Thr-1078–Pro-1097 are disordered. 4 N-linked (GlcNAc...) asparagine glycosylation sites follow: Asn-1133, Asn-1150, Asn-1156, and Asn-1171. Residues Asn-1133–Ala-1222 enclose the Fibronectin type-III 5 domain. A helical transmembrane segment spans residues Phe-1236–Ile-1256. The Cytoplasmic portion of the chain corresponds to Lys-1257–Ala-1369. Composition is skewed to basic and acidic residues over residues Val-1266 to Glu-1282 and Arg-1289 to Lys-1298. The segment at Val-1266–Ala-1369 is disordered. A compositionally biased stretch (polar residues) spans Leu-1300–Gln-1313.

It belongs to the immunoglobulin superfamily. L1/neurofascin/NgCAM family. In terms of processing, N-glycosylated and O-glycosylated. May be proteolytically cleaved at Arg-636.

The protein resides in the cell membrane. Functionally, cell adhesion, ankyrin-binding protein which may be involved in neurite extension, axonal guidance, synaptogenesis, myelination and neuron-glial cell interactions. This Gallus gallus (Chicken) protein is Neurofascin (NFASC).